The chain runs to 864 residues: Arf-GAP with GTPase, ANK repeat and PH domain-containing protein 1 (864 aa).

The small GTPase-like stretch occupies residues 66-276 (SRSVPELKVG…QTSNGGGSLS (211 aa)). Positions 67 to 241 (RSVPELKVGI…TRKKQQLSIG (175 aa)) constitute a GLD domain. Residues 78–85 (GNLASGKS), 122–126 (IRDEG), and 178–181 (TQDA) each bind GTP. Disordered stretches follow at residues 266 to 343 (SQTS…IGSG), 405 to 455 (VPGK…QMAS), and 499 to 549 (TGLG…LSST). The span at 275–289 (LSDYSSSVPSTPSTS) shows a compositional bias: low complexity. Positions 322–337 (KGSDPDKDKKGLESRA) are enriched in basic and acidic residues. Residues 346–591 (IPIKQGMLLK…WVQAIESQIL (246 aa)) form the PH domain. Positions 413–428 (ATSSCAPVASPKTNGL) are enriched in polar residues. Low complexity predominate over residues 507–517 (SSPSISSTTSP). A compositionally biased stretch (basic residues) spans 527–537 (ANRKKHRRKKS). Polar residues predominate over residues 538 to 549 (TSNFKVDGLSST). The Arf-GAP domain maps to 612–732 (ALALQSIRNL…LFLSPLPCRD (121 aa)). Residues 627–650 (CVDCDAQSPDWASLNLGALMCIEC) form a C4-type zinc finger. 2 ANK repeats span residues 771–800 (DRRTSLHLACRKGNVVLVQLLIWYGVDVMA) and 804–833 (HGNTALAYAKQAVTSEVRELLLQYGCPDEQ). Residues 845 to 854 (KNNRNNNSNA) are compositionally biased toward low complexity. Positions 845 to 864 (KNNRNNNSNAGGSGLMPTLI) are disordered.

Belongs to the centaurin gamma-like family. As to quaternary structure, homodimer. Interacts with several subunits of the AP-3 protein complex.

Its subcellular location is the cytoplasm. Its function is as follows. GTPase-activating protein. Directly and specifically regulates the adapter protein 3 (AP-3)-dependent trafficking of proteins in the endosomal-lysosomal system. The chain is Arf-GAP with GTPase, ANK repeat and PH domain-containing protein 1 (agap1) from Xenopus laevis (African clawed frog).